Here is a 126-residue protein sequence, read N- to C-terminus: Small nuclear ribonucleoprotein Sm D3 (126 aa).

Residue serine 2 is modified to N-acetylserine. The Sm domain occupies 5 to 77 (VPIKVLHEAE…IRFLILPDML (73 aa)). Repeat copies occupy residues 110–111 (RG), 112–113 (RG), 114–115 (RG), 116–117 (MG), and 118–119 (RG). Positions 110–119 (RGRGRGMGRG) are 5 X 2 AA tandem repeats of [RM]-G; required for interaction with SMN1.

The protein belongs to the snRNP core protein family. As to quaternary structure, core component of the spliceosomal U1, U2, U4 and U5 small nuclear ribonucleoproteins (snRNPs), the building blocks of the spliceosome. Most spliceosomal snRNPs contain a common set of Sm proteins, SNRPB, SNRPD1, SNRPD2, SNRPD3, SNRPE, SNRPF and SNRPG that assemble in a heptameric protein ring on the Sm site of the small nuclear RNA to form the core snRNP. Component of the U1 snRNP. The U1 snRNP is composed of the U1 snRNA and the 7 core Sm proteins SNRPB, SNRPD1, SNRPD2, SNRPD3, SNRPE, SNRPF and SNRPG, and at least three U1 snRNP-specific proteins SNRNP70/U1-70K, SNRPA/U1-A and SNRPC/U1-C. Component of the U4/U6-U5 tri-snRNP complex composed of the U4, U6 and U5 snRNAs and at least PRPF3, PRPF4, PRPF6, PRPF8, PRPF31, SNRNP200, TXNL4A, SNRNP40, SNRPB, SNRPD1, SNRPD2, SNRPD3, SNRPE, SNRPF, SNRPG, DDX23, CD2BP2, PPIH, SNU13, EFTUD2, SART1 and USP39, plus LSM2, LSM3, LSM4, LSM5, LSM6, LSM7 and LSM8. Component of the U7 snRNP complex, or U7 Sm protein core complex, that is composed of the U7 snRNA and at least LSM10, LSM11, SNRPB, SNRPD3, SNRPE, SNRPF and SNRPG; the complex does not contain SNRPD1 and SNRPD2. Component of the minor spliceosome, which splices U12-type introns. Part of the SMN-Sm complex that contains SMN1, GEMIN2/SIP1, DDX20/GEMIN3, GEMIN4, GEMIN5, GEMIN6, GEMIN7, GEMIN8, STRAP/UNRIP and the Sm proteins SNRPB, SNRPD1, SNRPD2, SNRPD3, SNRPE, SNRPF and SNRPG; catalyzes core snRNPs assembly. Forms a 6S pICln-Sm complex composed of CLNS1A/pICln, SNRPD1, SNRPD2, SNRPE, SNRPF and SNRPG; ring-like structure where CLNS1A/pICln mimics additional Sm proteins and which is unable to assemble into the core snRNP. Interacts (via C-terminus) with SMN1 (via Tudor domain); the interaction is direct. In terms of processing, methylated on arginine residues by PRMT5 and PRMT7; probable asymmetric dimethylation which is required for assembly and biogenesis of snRNPs.

The protein localises to the cytoplasm. The protein resides in the cytosol. It is found in the nucleus. Plays a role in pre-mRNA splicing as a core component of the spliceosomal U1, U2, U4 and U5 small nuclear ribonucleoproteins (snRNPs), the building blocks of the spliceosome. Component of both the pre-catalytic spliceosome B complex and activated spliceosome C complexes. As a component of the minor spliceosome, involved in the splicing of U12-type introns in pre-mRNAs. As part of the U7 snRNP it is involved in histone pre-mRNA 3'-end processing. This Homo sapiens (Human) protein is Small nuclear ribonucleoprotein Sm D3 (SNRPD3).